The primary structure comprises 592 residues: Arginine--tRNA ligase (592 aa).

The 'HIGH' region signature appears at 131–141 (ANPTGPMHVGH).

Belongs to the class-I aminoacyl-tRNA synthetase family. Monomer.

The protein resides in the cytoplasm. The enzyme catalyses tRNA(Arg) + L-arginine + ATP = L-arginyl-tRNA(Arg) + AMP + diphosphate. The polypeptide is Arginine--tRNA ligase (Rhodospirillum rubrum (strain ATCC 11170 / ATH 1.1.1 / DSM 467 / LMG 4362 / NCIMB 8255 / S1)).